We begin with the raw amino-acid sequence, 217 residues long: Probable transaldolase (217 aa).

The active-site Schiff-base intermediate with substrate is the Lys-83.

Belongs to the transaldolase family. Type 3B subfamily.

The protein localises to the cytoplasm. It catalyses the reaction D-sedoheptulose 7-phosphate + D-glyceraldehyde 3-phosphate = D-erythrose 4-phosphate + beta-D-fructose 6-phosphate. It participates in carbohydrate degradation; pentose phosphate pathway; D-glyceraldehyde 3-phosphate and beta-D-fructose 6-phosphate from D-ribose 5-phosphate and D-xylulose 5-phosphate (non-oxidative stage): step 2/3. Functionally, transaldolase is important for the balance of metabolites in the pentose-phosphate pathway. The protein is Probable transaldolase of Clostridium botulinum (strain Loch Maree / Type A3).